The sequence spans 101 residues: Protein RnfH (101 aa).

The protein belongs to the UPF0125 (RnfH) family.

The chain is Protein RnfH from Coxiella burnetii (strain RSA 331 / Henzerling II).